The chain runs to 108 residues: uncharacterized protein (108 aa).

A signal peptide spans 1–22 (MMIKQCVICLSLLVFGTTAAHA).

This is an uncharacterized protein from Bacillus subtilis (strain 168).